The sequence spans 391 residues: MLASYASDPLKSRGRLYKEIPTSYRNEFECDRDRIINTNAFRRLQYKTQVFINHEGDHYRNRLTHSLEVSTVARSVANTLNLSSDLAETIALAHDLGHTPFGHAGERALNECMKEYSGFSHNAQSLKILTLLEKRYAAYNGVNLTWEVLEGIIKHNGPITGEINEYIAEYNKQNDLELSTYASAEAQIASLADDISYISHDLEDSIGAKIIDFNSLAELKYIDQHVFELKSKFKNISSSCLIYEVVRKLMHELITDLLWQTKENLNKEKIINIYEIRHLNYQIVDFTEKTNDRIKETKKFLHERVYKSNKITAISLKCTKIVQGLFKVYMDDINLLPVNWKMLIDSDDTYSKARVIADYIAGMTDRFAIQEYNQLCSLNFNNILKLNYEYI.

The 137-residue stretch at 62–198 (RLTHSLEVST…ASLADDISYI (137 aa)) folds into the HD domain.

Belongs to the dGTPase family. Type 2 subfamily.

The polypeptide is Deoxyguanosinetriphosphate triphosphohydrolase-like protein (Rickettsia akari (strain Hartford)).